We begin with the raw amino-acid sequence, 430 residues long: Serine--tRNA ligase (430 aa).

An L-serine-binding site is contributed by 237–239 (TAE). ATP is bound at residue 268-270 (RSE). Glu-291 lines the L-serine pocket. 355–358 (EISS) contributes to the ATP binding site. Ser-391 lines the L-serine pocket.

Belongs to the class-II aminoacyl-tRNA synthetase family. Type-1 seryl-tRNA synthetase subfamily. As to quaternary structure, homodimer. The tRNA molecule binds across the dimer.

The protein resides in the cytoplasm. The catalysed reaction is tRNA(Ser) + L-serine + ATP = L-seryl-tRNA(Ser) + AMP + diphosphate + H(+). It carries out the reaction tRNA(Sec) + L-serine + ATP = L-seryl-tRNA(Sec) + AMP + diphosphate + H(+). The protein operates within aminoacyl-tRNA biosynthesis; selenocysteinyl-tRNA(Sec) biosynthesis; L-seryl-tRNA(Sec) from L-serine and tRNA(Sec): step 1/1. Catalyzes the attachment of serine to tRNA(Ser). Is also able to aminoacylate tRNA(Sec) with serine, to form the misacylated tRNA L-seryl-tRNA(Sec), which will be further converted into selenocysteinyl-tRNA(Sec). This Cronobacter sakazakii (strain ATCC BAA-894) (Enterobacter sakazakii) protein is Serine--tRNA ligase.